We begin with the raw amino-acid sequence, 937 residues long: Isoleucine--tRNA ligase (937 aa).

The 'HIGH' region motif lies at 58 to 68 (PYANGSIHIGH). Residue E561 coordinates L-isoleucyl-5'-AMP. A 'KMSKS' region motif is present at residues 602 to 606 (KMSKS). K605 serves as a coordination point for ATP. C900, C903, C920, and C923 together coordinate Zn(2+).

Belongs to the class-I aminoacyl-tRNA synthetase family. IleS type 1 subfamily. Monomer. Zn(2+) serves as cofactor.

The protein resides in the cytoplasm. It catalyses the reaction tRNA(Ile) + L-isoleucine + ATP = L-isoleucyl-tRNA(Ile) + AMP + diphosphate. Catalyzes the attachment of isoleucine to tRNA(Ile). As IleRS can inadvertently accommodate and process structurally similar amino acids such as valine, to avoid such errors it has two additional distinct tRNA(Ile)-dependent editing activities. One activity is designated as 'pretransfer' editing and involves the hydrolysis of activated Val-AMP. The other activity is designated 'posttransfer' editing and involves deacylation of mischarged Val-tRNA(Ile). In Pectobacterium atrosepticum (strain SCRI 1043 / ATCC BAA-672) (Erwinia carotovora subsp. atroseptica), this protein is Isoleucine--tRNA ligase.